Reading from the N-terminus, the 730-residue chain is Elongation factor 2 (730 aa).

Residues Asp-19–Leu-260 enclose the tr-type G domain. Residues Ala-28–Thr-35, Asp-94–His-98, and Asn-148–Asp-151 each bind GTP. The residue at position 597 (His-597) is a Diphthamide.

The protein belongs to the TRAFAC class translation factor GTPase superfamily. Classic translation factor GTPase family. EF-G/EF-2 subfamily.

It localises to the cytoplasm. Its function is as follows. Catalyzes the GTP-dependent ribosomal translocation step during translation elongation. During this step, the ribosome changes from the pre-translocational (PRE) to the post-translocational (POST) state as the newly formed A-site-bound peptidyl-tRNA and P-site-bound deacylated tRNA move to the P and E sites, respectively. Catalyzes the coordinated movement of the two tRNA molecules, the mRNA and conformational changes in the ribosome. The protein is Elongation factor 2 of Methanoculleus marisnigri (strain ATCC 35101 / DSM 1498 / JR1).